The following is a 357-amino-acid chain: uncharacterized protein (357 aa).

The signal sequence occupies residues 1–19; sequence MKRILSFIFIILFFNSSYA.

This is an uncharacterized protein from Rickettsia prowazekii (strain Madrid E).